We begin with the raw amino-acid sequence, 478 residues long: Adenosylhomocysteinase (478 aa).

3 residues coordinate substrate: Thr56, Asp139, and Glu201. Thr202–Thr204 provides a ligand contact to NAD(+). The substrate site is built by Lys231 and Asp235. Residues Asn236, Gly265 to Gly270, Glu288, Asn323, Ile344 to His346, and Asn392 each bind NAD(+).

The protein belongs to the adenosylhomocysteinase family. NAD(+) is required as a cofactor.

It is found in the cytoplasm. The enzyme catalyses S-adenosyl-L-homocysteine + H2O = L-homocysteine + adenosine. It participates in amino-acid biosynthesis; L-homocysteine biosynthesis; L-homocysteine from S-adenosyl-L-homocysteine: step 1/1. Functionally, may play a key role in the regulation of the intracellular concentration of adenosylhomocysteine. The sequence is that of Adenosylhomocysteinase from Corynebacterium diphtheriae (strain ATCC 700971 / NCTC 13129 / Biotype gravis).